The sequence spans 188 residues: Elongation factor P (188 aa).

The protein belongs to the elongation factor P family.

It localises to the cytoplasm. It participates in protein biosynthesis; polypeptide chain elongation. Functionally, involved in peptide bond synthesis. Stimulates efficient translation and peptide-bond synthesis on native or reconstituted 70S ribosomes in vitro. Probably functions indirectly by altering the affinity of the ribosome for aminoacyl-tRNA, thus increasing their reactivity as acceptors for peptidyl transferase. The chain is Elongation factor P from Rickettsia massiliae (strain Mtu5).